We begin with the raw amino-acid sequence, 219 residues long: ATP-dependent dethiobiotin synthetase BioD (219 aa).

Position 12–17 (12–17 (GVGKTI)) interacts with ATP. Residue T16 participates in Mg(2+) binding. K32 is an active-site residue. ATP is bound by residues D43 and 96–99 (ETSG). Residues D43 and E96 each contribute to the Mg(2+) site.

This sequence belongs to the dethiobiotin synthetase family. Homodimer. Mg(2+) serves as cofactor.

The protein resides in the cytoplasm. The catalysed reaction is (7R,8S)-7,8-diammoniononanoate + CO2 + ATP = (4R,5S)-dethiobiotin + ADP + phosphate + 3 H(+). Its pathway is cofactor biosynthesis; biotin biosynthesis; biotin from 7,8-diaminononanoate: step 1/2. Functionally, catalyzes a mechanistically unusual reaction, the ATP-dependent insertion of CO2 between the N7 and N8 nitrogen atoms of 7,8-diaminopelargonic acid (DAPA, also called 7,8-diammoniononanoate) to form a ureido ring. This is ATP-dependent dethiobiotin synthetase BioD from Chlamydia pneumoniae (Chlamydophila pneumoniae).